The primary structure comprises 338 residues: Transcription factor AP-4 (338 aa).

The region spanning I48 to L99 is the bHLH domain. The leucine-zipper 1 stretch occupies residues E100–L120. The tract at residues Q118–D141 is disordered. 3 positions are modified to phosphoserine: S123, S124, and S139. K147 participates in a covalent cross-link: Glycyl lysine isopeptide (Lys-Gly) (interchain with G-Cter in SUMO2). The segment at L151–L179 is leucine-zipper 2. Residues K187, K189, and K285 each participate in a glycyl lysine isopeptide (Lys-Gly) (interchain with G-Cter in SUMO2) cross-link. Positions Q283 to R294 are enriched in basic and acidic residues. A disordered region spans residues Q283–P338.

Efficient DNA binding requires dimerization with another bHLH protein. Homodimer.

Its subcellular location is the nucleus. In terms of biological role, transcription factor that activates both viral and cellular genes by binding to the symmetrical DNA sequence 5'-CAGCTG-3'. This Homo sapiens (Human) protein is Transcription factor AP-4 (TFAP4).